A 260-amino-acid chain; its full sequence is MVLIRVQANLLILQLSYAQKSSELIIGGDECNINEHRFLVALYTSRSRRFYCGGTLINQEWVLTAAHCDRKNIRIKLGMHSEKVPNEDAETRVPKEKFFCLSSKTYTKWDKDIMLMRLKRPVNNSTHIAPVSLPSNPPSVDSVCRVMGWGTITSPQETYPDVPHCANINILDYEVCQAAHGGLPATSRTLCAGILKGGKDSCKGDSGGPLICNGQFQGIASWGAHPCGQSLKPGVYTKVFDYTEWIQSIIAGNTDATCPP.

The first 18 residues, methionine 1 to alanine 18, serve as a signal peptide directing secretion. A propeptide spanning residues glutamine 19–leucine 24 is cleaved from the precursor. In terms of domain architecture, Peptidase S1 spans isoleucine 25 to glycine 252. Disulfide bonds link cysteine 31-cysteine 165, cysteine 52-cysteine 68, cysteine 100-cysteine 258, cysteine 144-cysteine 212, cysteine 176-cysteine 191, and cysteine 202-cysteine 227. Active-site charge relay system residues include histidine 67 and aspartate 112. N-linked (GlcNAc...) asparagine glycosylation is found at asparagine 123 and asparagine 124. The active-site Charge relay system is the serine 206.

It belongs to the peptidase S1 family. Snake venom subfamily. Monomer. As to expression, expressed by the venom gland.

The protein resides in the secreted. Its activity is regulated as follows. Completely inhibited by PMSF, and N-tosyl-Lphenylalanine chloromethyl ketone (TPCK) and poorly inhibited by benzamidine and derivates. Not inhibited by EDTA, heparin and hirudin. In terms of biological role, thrombin-like snake venom serine protease. The recombinant form clots fibrinogen by cleaving fibrinogen Aalpha chain (FGA), and slowly Bbeta chain (FGB). Has amidolytic activities. The chain is Thrombin-like enzyme gloshedobin from Gloydius shedaoensis (Shedao island pit viper).